We begin with the raw amino-acid sequence, 257 residues long: uncharacterized protein (257 aa).

A helical membrane pass occupies residues 6–26; sequence IFWLNLAAIIIISIVVSGDMF.

This sequence belongs to the staphylococcal tandem lipoprotein family.

Its subcellular location is the cell membrane. This is an uncharacterized protein from Staphylococcus aureus (strain COL).